The sequence spans 521 residues: UDP-N-acetylmuramate--L-alanine ligase (521 aa).

Position 136-142 (136-142 (GAHGKTT)) interacts with ATP.

Belongs to the MurCDEF family.

It is found in the cytoplasm. The catalysed reaction is UDP-N-acetyl-alpha-D-muramate + L-alanine + ATP = UDP-N-acetyl-alpha-D-muramoyl-L-alanine + ADP + phosphate + H(+). It participates in cell wall biogenesis; peptidoglycan biosynthesis. Cell wall formation. The sequence is that of UDP-N-acetylmuramate--L-alanine ligase from Bifidobacterium adolescentis (strain ATCC 15703 / DSM 20083 / NCTC 11814 / E194a).